A 180-amino-acid chain; its full sequence is uncharacterized protein (180 aa).

This sequence belongs to the CdaR family.

This is an uncharacterized protein from Thermomonospora curvata.